The sequence spans 289 residues: Phosphatidylserine decarboxylase proenzyme (289 aa).

Catalysis depends on charge relay system; for autoendoproteolytic cleavage activity residues Asp-92, His-149, and Ser-254. Ser-254 serves as the catalytic Schiff-base intermediate with substrate; via pyruvic acid; for decarboxylase activity. Pyruvic acid (Ser); by autocatalysis is present on Ser-254.

It belongs to the phosphatidylserine decarboxylase family. PSD-B subfamily. Prokaryotic type I sub-subfamily. In terms of assembly, heterodimer of a large membrane-associated beta subunit and a small pyruvoyl-containing alpha subunit. Pyruvate is required as a cofactor. Post-translationally, is synthesized initially as an inactive proenzyme. Formation of the active enzyme involves a self-maturation process in which the active site pyruvoyl group is generated from an internal serine residue via an autocatalytic post-translational modification. Two non-identical subunits are generated from the proenzyme in this reaction, and the pyruvate is formed at the N-terminus of the alpha chain, which is derived from the carboxyl end of the proenzyme. The autoendoproteolytic cleavage occurs by a canonical serine protease mechanism, in which the side chain hydroxyl group of the serine supplies its oxygen atom to form the C-terminus of the beta chain, while the remainder of the serine residue undergoes an oxidative deamination to produce ammonia and the pyruvoyl prosthetic group on the alpha chain. During this reaction, the Ser that is part of the protease active site of the proenzyme becomes the pyruvoyl prosthetic group, which constitutes an essential element of the active site of the mature decarboxylase.

Its subcellular location is the cell membrane. It catalyses the reaction a 1,2-diacyl-sn-glycero-3-phospho-L-serine + H(+) = a 1,2-diacyl-sn-glycero-3-phosphoethanolamine + CO2. The protein operates within phospholipid metabolism; phosphatidylethanolamine biosynthesis; phosphatidylethanolamine from CDP-diacylglycerol: step 2/2. Its function is as follows. Catalyzes the formation of phosphatidylethanolamine (PtdEtn) from phosphatidylserine (PtdSer). The sequence is that of Phosphatidylserine decarboxylase proenzyme from Pseudomonas aeruginosa (strain ATCC 15692 / DSM 22644 / CIP 104116 / JCM 14847 / LMG 12228 / 1C / PRS 101 / PAO1).